We begin with the raw amino-acid sequence, 549 residues long: Hydroxylamine reductase (549 aa).

4 residues coordinate [4Fe-4S] cluster: C3, C6, C15, and C21. Residues H244, E268, C313, C405, C433, C458, E492, and K494 each coordinate hybrid [4Fe-2O-2S] cluster. C405 is subject to Cysteine persulfide.

The protein belongs to the HCP family. The cofactor is [4Fe-4S] cluster. It depends on hybrid [4Fe-2O-2S] cluster as a cofactor.

The protein localises to the cytoplasm. The enzyme catalyses A + NH4(+) + H2O = hydroxylamine + AH2 + H(+). Catalyzes the reduction of hydroxylamine to form NH(3) and H(2)O. In Gloeothece citriformis (strain PCC 7424) (Cyanothece sp. (strain PCC 7424)), this protein is Hydroxylamine reductase.